A 489-amino-acid polypeptide reads, in one-letter code: RNA polymerase II subunit 5-mediating protein homolog (489 aa).

Disordered regions lie at residues 141 to 188 (NSDE…MDEE), 200 to 329 (EEKE…EEDE), 396 to 415 (ILKT…SYNE), and 434 to 489 (FENQ…RQNK). The segment covering 157-168 (QKSTTTTTTTTT) has biased composition (low complexity). 2 stretches are compositionally biased toward basic and acidic residues: residues 169-188 (SKDK…MDEE) and 215-224 (FNKKFNKKLD). Composition is skewed to acidic residues over residues 227–265 (GSDE…EDEK), 276–298 (EEDD…EYYD), and 315–329 (QGDD…EEDE). Residues 396-413 (ILKTNSSGNLMSTIPKSY) show a composition bias toward polar residues. The segment covering 480–489 (SRFKSSRQNK) has biased composition (basic residues).

This sequence belongs to the RNA polymerase II subunit 5-mediating protein family.

The protein resides in the nucleus. The chain is RNA polymerase II subunit 5-mediating protein homolog (rmp) from Dictyostelium discoideum (Social amoeba).